Consider the following 123-residue polypeptide: Small ribosomal subunit protein uS11 (123 aa).

Belongs to the universal ribosomal protein uS11 family. As to quaternary structure, part of the 30S ribosomal subunit. Interacts with proteins S7 and S18. Binds to IF-3.

Located on the platform of the 30S subunit, it bridges several disparate RNA helices of the 16S rRNA. Forms part of the Shine-Dalgarno cleft in the 70S ribosome. This is Small ribosomal subunit protein uS11 from Coxiella burnetii (strain CbuG_Q212) (Coxiella burnetii (strain Q212)).